Consider the following 1092-residue polypeptide: Elongation factor 3 (1092 aa).

Valine 92 serves as a coordination point for ADP. HEAT repeat units lie at residues 95–133 (MVKT…SPVS), 138–175 (PYMI…RLTP), 177–214 (ATKQ…TAPR), 218–255 (TAVP…LINN), 257–293 (DIEK…EVLP), 294–331 (PTLA…LVEK), and 333–370 (QIIA…KILT). Glutamate 454 is a binding site for ADP. ABC transporter domains lie at 486–704 (EELC…YYEL) and 730–1044 (LKVQ…DKNK). 4 residues coordinate ADP: asparagine 766, glutamate 973, asparagine 976, and histidine 1002. Disordered stretches follow at residues 1023–1044 (TPTG…DKNK) and 1063–1092 (SKLS…DDDE). Basic residues predominate over residues 1063 to 1075 (SKLSGKDLRKKRK). Residues 1076 to 1086 (EREARRKRGEE) are compositionally biased toward basic and acidic residues.

This sequence belongs to the ABC transporter superfamily. ABCF family. EF3 subfamily.

Its subcellular location is the cytoplasm. It is found in the cytosol. It carries out the reaction ATP + H2O = ADP + phosphate + H(+). It participates in protein biosynthesis; polypeptide chain elongation. In terms of biological role, ribosome-dependent ATPase that functions in cytoplasmic translation elongation. Required for the ATP-dependent release of deacylated tRNA from the ribosomal E-site during protein biosynthesis. Stimulates the eEF1A-dependent binding of aminoacyl-tRNA to the ribosomal A-site, which has reduced affinity for tRNA as long as the E-site is occupied. Assists translation termination by stimulating the release of nascent protein from the ribosome by release factors. The chain is Elongation factor 3 from Gonapodya prolifera (strain JEL478) (Monoblepharis prolifera).